Reading from the N-terminus, the 307-residue chain is Aspartate carbamoyltransferase catalytic subunit (307 aa).

The carbamoyl phosphate site is built by R59 and T60. Residue K87 coordinates L-aspartate. Carbamoyl phosphate is bound by residues R109, H137, and Q140. 2 residues coordinate L-aspartate: R170 and R224. 2 residues coordinate carbamoyl phosphate: G265 and P266.

It belongs to the aspartate/ornithine carbamoyltransferase superfamily. ATCase family. As to quaternary structure, heterododecamer (2C3:3R2) of six catalytic PyrB chains organized as two trimers (C3), and six regulatory PyrI chains organized as three dimers (R2).

The enzyme catalyses carbamoyl phosphate + L-aspartate = N-carbamoyl-L-aspartate + phosphate + H(+). The protein operates within pyrimidine metabolism; UMP biosynthesis via de novo pathway; (S)-dihydroorotate from bicarbonate: step 2/3. Its function is as follows. Catalyzes the condensation of carbamoyl phosphate and aspartate to form carbamoyl aspartate and inorganic phosphate, the committed step in the de novo pyrimidine nucleotide biosynthesis pathway. This chain is Aspartate carbamoyltransferase catalytic subunit, found in Cytophaga hutchinsonii (strain ATCC 33406 / DSM 1761 / CIP 103989 / NBRC 15051 / NCIMB 9469 / D465).